We begin with the raw amino-acid sequence, 353 residues long: Biotin synthase (353 aa).

One can recognise a Radical SAM core domain in the interval 51 to 270; sequence NEVQCNQLLN…IALARIMMPK (220 aa). The [4Fe-4S] cluster site is built by Cys66, Cys70, and Cys73. Residues Cys110, Cys141, Cys201, and Arg274 each coordinate [2Fe-2S] cluster. Positions 330-353 are disordered; it reads APVEAHSHDHDHDHHDHHHGHSHS. The span at 334 to 343 shows a compositional bias: basic and acidic residues; that stretch reads AHSHDHDHDH. Basic residues predominate over residues 344–353; the sequence is HDHHHGHSHS.

The protein belongs to the radical SAM superfamily. Biotin synthase family. In terms of assembly, homodimer. The cofactor is [4Fe-4S] cluster. It depends on [2Fe-2S] cluster as a cofactor.

The catalysed reaction is (4R,5S)-dethiobiotin + (sulfur carrier)-SH + 2 reduced [2Fe-2S]-[ferredoxin] + 2 S-adenosyl-L-methionine = (sulfur carrier)-H + biotin + 2 5'-deoxyadenosine + 2 L-methionine + 2 oxidized [2Fe-2S]-[ferredoxin]. The protein operates within cofactor biosynthesis; biotin biosynthesis; biotin from 7,8-diaminononanoate: step 2/2. Catalyzes the conversion of dethiobiotin (DTB) to biotin by the insertion of a sulfur atom into dethiobiotin via a radical-based mechanism. The polypeptide is Biotin synthase (Rhodopseudomonas palustris (strain HaA2)).